The primary structure comprises 879 residues: MAKVRVYELAKELNVESKTLLAKLHELGEFVRSASSTIEAPVVRKLREAFPPPPEPAAGNGSAAQPTAKPSAAKSTGKTTEPAADAAAPPAVTTPPSAAPAGATTSAPSDAGGEKIATPPRPVKLPQPPRPAPAVPKPPSGPPRMGNNPFTSPMPRPMPPRPVQRPTGTPGTPGIPRPPLRPGAPGRPTPGAMPPRPAAGRAAPGRGAPIRLPGGLGRAPAPPSAGRPGVGGRGRGAPGGAFGRGPGAKPSRPHKSKKQRRQEFDNLQAPVIGGIQIPRGNGQVVRLPRGASLADFADKIGANPASLVQVAFHLGEMVTATQSVNEETLQLLGAELGYEVQIVSPEDEDRELLESFDIELGTDQGDEAALVPRPPVVTVMGHVDHGKTKLLDAIRNTNVAAREHGGITQHIGAYQVTAQTADGPRQITFIDTPGHEAFTAMRARGAQVTDIAVLVVAADDGVMPQTVEALNHAKAADVPIVVAVNKIDKPGADPVKVRGQLTEYGLVAEEYGGDTMFVDVSALTGQGIDDLLEAILLTADAALDLRANPNQPAQGVAIEAHLDRGRGPVATVLVQRGTLRVGDSIVAGEAFGRVRAMLDEFGQPVEEAGPSRPVQVLGFTSVPDAGDTFLVVPEDRVARQIAERRAARERNAQLAASRRRRTLEDILERMEKGEVAELRLILKGDVSGSVEALEDALLKIDVGDEARIRVIDRGVGAITENNVMLAVASDAIIIGFNVRPEGKARELAEREGVDVRYYSVIYQAIEDVEAALKGLLKPVYEEVQLGTAEVREVFRSSKFGNIAGCLVRSGTITRGAKARVVRDGVVVANDVSIASLRRFKDDVTEVREGFECGVGLGSFNDIRVGDVIETYEMREKPRS.

Positions 48–261 (EAFPPPPEPA…RPHKSKKQRR (214 aa)) are disordered. A compositionally biased stretch (low complexity) spans 82–111 (PAADAAAPPAVTTPPSAAPAGATTSAPSDA). Pro residues-rich tracts occupy residues 119–142 (PPRP…PSGP), 152–163 (SPMPRPMPPRPV), and 173–197 (PGIP…PPRP). Low complexity predominate over residues 198–213 (AAGRAAPGRGAPIRLP). Over residues 228–246 (PGVGGRGRGAPGGAFGRGP) the composition is skewed to gly residues. Residues 251–260 (SRPHKSKKQR) are compositionally biased toward basic residues. Residues 372 to 543 (PRPPVVTVMG…AILLTADAAL (172 aa)) form the tr-type G domain. The segment at 381–388 (GHVDHGKT) is G1. Residue 381-388 (GHVDHGKT) participates in GTP binding. A G2 region spans residues 406–410 (GITQH). The interval 431–434 (DTPG) is G3. Residues 431–435 (DTPGH) and 485–488 (NKID) contribute to the GTP site. A G4 region spans residues 485–488 (NKID). Residues 521–523 (SAL) form a G5 region.

This sequence belongs to the TRAFAC class translation factor GTPase superfamily. Classic translation factor GTPase family. IF-2 subfamily.

The protein localises to the cytoplasm. One of the essential components for the initiation of protein synthesis. Protects formylmethionyl-tRNA from spontaneous hydrolysis and promotes its binding to the 30S ribosomal subunits. Also involved in the hydrolysis of GTP during the formation of the 70S ribosomal complex. This chain is Translation initiation factor IF-2, found in Acidothermus cellulolyticus (strain ATCC 43068 / DSM 8971 / 11B).